The chain runs to 194 residues: Probable DNA-directed RNA polymerase subunit delta (194 aa).

The 70-residue stretch at 14 to 83 (LSMIEVARAI…GENKWGLRSW (70 aa)) folds into the HTH HARE-type domain. The tract at residues 117 to 194 (GDEDAIDYSD…SDDEEDEEGE (78 aa)) is disordered.

Belongs to the RpoE family. In terms of assembly, RNAP is composed of a core of 2 alpha, a beta and a beta' subunits. The core is associated with a delta subunit and one of several sigma factors.

In terms of biological role, participates in both the initiation and recycling phases of transcription. In the presence of the delta subunit, RNAP displays an increased specificity of transcription, a decreased affinity for nucleic acids, and an increased efficiency of RNA synthesis because of enhanced recycling. In Streptococcus mutans serotype c (strain ATCC 700610 / UA159), this protein is Probable DNA-directed RNA polymerase subunit delta.